A 59-amino-acid polypeptide reads, in one-letter code: MARRESSGGSGGLMSSAGLMRYFEAEESAIKIDPKTVIIAAVASGAFIWILNFTYGRFW.

Residues 1–33 (MARRESSGGSGGLMSSAGLMRYFEAEESAIKID) are Cytoplasmic-facing. A helical membrane pass occupies residues 34–55 (PKTVIIAAVASGAFIWILNFTY). Residues 56 to 59 (GRFW) lie on the Extracellular side of the membrane.

Belongs to the SEC61-beta family. Component of the protein translocase complex. Heterotrimer consisting of alpha (SecY), beta (SecG) and gamma (SecE) subunits. Can form oligomers of the heterotrimer.

It is found in the cell membrane. Involved in protein export. The function of the beta subunit is unknown, but it may be involved in stabilization of the trimeric complex. The sequence is that of Preprotein translocase subunit SecG from Methanocella arvoryzae (strain DSM 22066 / NBRC 105507 / MRE50).